The chain runs to 113 residues: UPF0145 protein SynWH7803_1684 (113 aa).

The protein belongs to the UPF0145 family.

This chain is UPF0145 protein SynWH7803_1684, found in Synechococcus sp. (strain WH7803).